The chain runs to 609 residues: Zinc metalloproteinase/disintegrin-like HR1a (609 aa).

The N-terminal stretch at 1-20 (MIQVLLVTICLAVFPYQGSS) is a signal peptide. Residues 21–190 (IILGSGNVND…KKASKLVVTA (170 aa)) constitute a propeptide that is removed on maturation. A Peptidase M12B domain is found at 200-396 (RFIELVIVAD…DEPQCILNEP (197 aa)). Ca(2+)-binding residues include E203 and D287. N298 carries an N-linked (GlcNAc...) asparagine glycan. Cystine bridges form between C311–C391, C351–C375, and C353–C358. H336 contacts Zn(2+). E337 is an active-site residue. Zn(2+) is bound by residues H340 and H346. N350 is a glycosylation site (N-linked (GlcNAc...) asparagine). Residue N374 is glycosylated (N-linked (GlcNAc...) asparagine). Ca(2+) contacts are provided by C391 and N394. A propeptide spanning residues 397–400 (LRTD) is cleaved from the precursor. Positions 404–490 (PPVCGNELLE…DCPTDRFHRN (87 aa)) constitute a Disintegrin domain. Positions 406, 409, 411, 413, 416, and 419 each coordinate Ca(2+). 22 disulfides stabilise this stretch: C407-C426, C407-C436, C418-C431, C418-C436, C420-C426, C430-C453, C444-C450, C449-C475, C462-C482, C469-C494, C469-C501, C494-C506, C501-C506, C513-C528, C513-C563, C528-C571, C541-C551, C551-C558, C558-C597, C563-C571, C591-C602, and C597-C602. The short motif at 468–470 (ECD) is the D/ECD-tripeptide element. Positions 470, 473, and 485 each coordinate Ca(2+). An N-linked (GlcNAc...) asparagine glycan is attached at N520.

This sequence belongs to the venom metalloproteinase (M12B) family. P-III subfamily. P-IIIb sub-subfamily. Monomer. Zn(2+) is required as a cofactor. In terms of tissue distribution, expressed by the venom gland.

The protein localises to the secreted. In terms of biological role, zinc protease that induces hemorrhage and has proteolytic activity. Has preference for Ala, His, Pro, Met, and Tyr at the P1 position, in descending order (in vitro). Predominantly prefers Val and Asp at the P3 and P2 positions, respectively. Its function is as follows. Inhibits platelet aggregation induced by ADP, thrombin, platelet-activating factor and collagen. Acts by inhibiting fibrinogen interaction with platelet receptors alpha-IIb/beta-3 (ITGA2B/ITGB3). The chain is Zinc metalloproteinase/disintegrin-like HR1a from Protobothrops flavoviridis (Habu).